The following is a 334-amino-acid chain: F-box protein AUF1 (334 aa).

The region spanning 1–49 (MDAFDAIPDPVVIDILNRVGDVKTLIRCRSVSKRFNSLATQSESLLLQL) is the F-box domain.

As to quaternary structure, part of a SCF (ASK-cullin-F-box) protein ligase complex. Interacts with SKP1A/ASK1, SKP1B/ASK2, ASK11 and ASK13.

The protein resides in the nucleus. The protein operates within protein modification; protein ubiquitination. Its function is as follows. Component of SCF(ASK-cullin-F-box) E3 ubiquitin ligase complexes, which may mediate the ubiquitination and subsequent proteasomal degradation of target proteins. Involved in the control of basipetal and acropetal auxin transport by promoting the distribution and expression of the auxin transporter PIN2. Promotes cytokinin-mediated cell expansion in the root elongation and differentiation zone, without affecting root cell division. In Arabidopsis thaliana (Mouse-ear cress), this protein is F-box protein AUF1.